The primary structure comprises 234 residues: Ribose-5-phosphate isomerase A (234 aa).

Substrate-binding positions include 34-37, 90-93, and 103-106; these read TGST, DGAD, and KGGG. Catalysis depends on E112, which acts as the Proton acceptor. A substrate-binding site is contributed by K130.

Belongs to the ribose 5-phosphate isomerase family. As to quaternary structure, homodimer.

It catalyses the reaction aldehydo-D-ribose 5-phosphate = D-ribulose 5-phosphate. It participates in carbohydrate degradation; pentose phosphate pathway; D-ribose 5-phosphate from D-ribulose 5-phosphate (non-oxidative stage): step 1/1. In terms of biological role, catalyzes the reversible conversion of ribose-5-phosphate to ribulose 5-phosphate. The polypeptide is Ribose-5-phosphate isomerase A (Methanosarcina acetivorans (strain ATCC 35395 / DSM 2834 / JCM 12185 / C2A)).